The primary structure comprises 147 residues: 3-dehydroquinate dehydratase (147 aa).

Residue Y23 is the Proton acceptor of the active site. Residues N74, H80, and D87 each contribute to the substrate site. H100 functions as the Proton donor in the catalytic mechanism. Residues 101 to 102 (IS) and R111 each bind substrate.

Belongs to the type-II 3-dehydroquinase family. As to quaternary structure, homododecamer.

It catalyses the reaction 3-dehydroquinate = 3-dehydroshikimate + H2O. It functions in the pathway metabolic intermediate biosynthesis; chorismate biosynthesis; chorismate from D-erythrose 4-phosphate and phosphoenolpyruvate: step 3/7. In terms of biological role, catalyzes a trans-dehydration via an enolate intermediate. This is 3-dehydroquinate dehydratase from Prochlorococcus marinus (strain MIT 9215).